The following is a 610-amino-acid chain: MIQVLLVTICLAAFPYQGSSIILESGNVNDYEVVYPRKVTALPKGAVQPKYEDAMQYEFKVNGEPVVLHLEKNKGLFSKDYSETHYSPDGREITTYPAVEDHCYYHGRIENDADSTASISACNGLKGHFKLQRETYFIEPLKLSNSEAHAVFKYENVEKEDEAPKMCGVTQNWKSYEPIKKASQLVVTAEQQKYNPFRYVELFIVVDQEMVTKNNGDLDKIKARMYELANIVNEILRYLYMHAALVGLEIWSNGDKITVKPDVDYTLNSFAEWRKTDLLTRKKHDNAQLLTAIDFNGPTIGYAYIGSMCHPKRSVAIVEDYSPINLVVAVIMAHEMGHNLGIHHDTDFCSCGDYPCIMGPTISNEPSKFFSNCSYIQCWDFIMKENPQCILNEPLGTDIVSPPVCGNELLEVGEECDCGTPENCQNECCDAATCKLKSGSQCGHGDCCEQCKFSKSGTECRASMSECDPAEHCTGQSSECPADVFHKNGQPCLDNYGYCYNGNCPIMYHQCYALFGADVYEAEDSCFKDNQKGNYYGYCRKENGKKIPCAPEDVKCGRLYCKDNSPGQNNPCKMFYSNDDEHKGMVLPGTKCADGKVCSNGHCVDVATAY.

The signal sequence occupies residues 1-20; it reads MIQVLLVTICLAAFPYQGSS. The propeptide occupies 21-189; sequence IILESGNVND…KKASQLVVTA (169 aa). Residues 198 to 394 form the Peptidase M12B domain; sequence RYVELFIVVD…ENPQCILNEP (197 aa). Residues Glu201 and Asp285 each coordinate Ca(2+). 3 disulfides stabilise this stretch: Cys309/Cys389, Cys349/Cys373, and Cys351/Cys356. His334 contributes to the Zn(2+) binding site. Glu335 is an active-site residue. The Zn(2+) site is built by His338 and His344. Asn372 carries N-linked (GlcNAc...) asparagine glycosylation. Residues Cys389, Asn392, Val404, Asn407, Leu409, Glu411, Glu414, and Asp417 each coordinate Ca(2+). A Disintegrin domain is found at 402–488; that stretch reads PPVCGNELLE…ECPADVFHKN (87 aa). 14 disulfides stabilise this stretch: Cys405–Cys434, Cys416–Cys429, Cys418–Cys424, Cys428–Cys451, Cys442–Cys448, Cys447–Cys473, Cys460–Cys480, Cys467–Cys499, Cys492–Cys504, Cys511–Cys561, Cys526–Cys572, Cys539–Cys549, Cys556–Cys598, and Cys592–Cys603. The short motif at 466–468 is the D/ECD-tripeptide element; the sequence is ECD. Positions 468, 469, 471, 483, and 484 each coordinate Ca(2+).

The protein belongs to the venom metalloproteinase (M12B) family. P-III subfamily. P-IIIa sub-subfamily. As to quaternary structure, monomer. Zn(2+) serves as cofactor. As to expression, expressed by the venom gland.

It localises to the secreted. Snake venom metalloproteinase that impairs hemostasis in the envenomed animal. This chain is Zinc metalloproteinase-disintegrin-like BITM06A, found in Bothrops insularis (Golden lancehead).